A 114-amino-acid chain; its full sequence is Large ribosomal subunit protein bL17 (114 aa).

Belongs to the bacterial ribosomal protein bL17 family. As to quaternary structure, part of the 50S ribosomal subunit. Contacts protein L32.

The sequence is that of Large ribosomal subunit protein bL17 from Halothermothrix orenii (strain H 168 / OCM 544 / DSM 9562).